A 338-amino-acid chain; its full sequence is Lipoate-protein ligase A (338 aa).

In terms of domain architecture, BPL/LPL catalytic spans 29 to 216 (PATQRVLFLW…AFFAHYGERV (188 aa)). Residues R71, 76–79 (GAVF), and K134 each bind ATP. K134 contributes to the (R)-lipoate binding site.

It belongs to the LplA family. Monomer.

The protein resides in the cytoplasm. It catalyses the reaction L-lysyl-[lipoyl-carrier protein] + (R)-lipoate + ATP = N(6)-[(R)-lipoyl]-L-lysyl-[lipoyl-carrier protein] + AMP + diphosphate + H(+). Its pathway is protein modification; protein lipoylation via exogenous pathway; protein N(6)-(lipoyl)lysine from lipoate: step 1/2. The protein operates within protein modification; protein lipoylation via exogenous pathway; protein N(6)-(lipoyl)lysine from lipoate: step 2/2. Its function is as follows. Catalyzes both the ATP-dependent activation of exogenously supplied lipoate to lipoyl-AMP and the transfer of the activated lipoyl onto the lipoyl domains of lipoate-dependent enzymes. The chain is Lipoate-protein ligase A from Escherichia coli O9:H4 (strain HS).